A 239-amino-acid chain; its full sequence is Increased recombination centers protein 22-1 (239 aa).

A signal peptide spans 1–19; it reads MKLSTIFTAFAATIATVAG. Over 20–161 the chain is Lumenal; it reads YETTGSKQTV…AAVSFFDPRL (142 aa). Residues 162-182 traverse the membrane as a helical segment; sequence IFLELVLLITFAGLIYVGYEI. Residues 183–239 are Cytoplasmic-facing; sequence WGKQYFKGVASVKAKKVSAAKASSPVASGPSTTSATGYDTNWIPESHLKQKKTKKVN. Positions 201 to 213 are enriched in low complexity; sequence AAKASSPVASGPS. The interval 201-222 is disordered; the sequence is AAKASSPVASGPSTTSATGYDT.

The protein belongs to the IRC22 family.

Its subcellular location is the endoplasmic reticulum membrane. In terms of biological role, is probably involved in a pathway contributing to genomic integrity. The chain is Increased recombination centers protein 22-1 (IRC22-1) from Candida albicans (strain WO-1) (Yeast).